We begin with the raw amino-acid sequence, 360 residues long: POU domain, class 5, transcription factor 1 (360 aa).

2 disordered regions span residues 1-51 (MAGH…GPGV) and 88-114 (GGLETSQPEGEAGVGVESNSDGASPEP). The 9aaTAD signature appears at 4 to 12 (HLTSDFAFS). Phosphoserine; by MAPK is present on serine 111. Lysine 123 is covalently cross-linked (Glycyl lysine isopeptide (Lys-Gly) (interchain with G-Cter in SUMO)). The POU-specific domain maps to 138–212 (DIKALQKELE…LLQKWVEEAD (75 aa)). DNA contacts are provided by arginine 157 and glutamine 164. DNA-binding regions lie at residues 180 to 186 (SQTTICR) and 193 to 196 (SFKN). The segment at residues 230 to 289 (RKRKRTSIENRVRGNLENLFLQCPKPTLQQISHIAQQLGLEKDVVRVWFCNRRQKGKRSS) is a DNA-binding region (homeobox). The residue at position 235 (threonine 235) is a Phosphothreonine. Serine 236, serine 289, serine 290, and serine 355 each carry phosphoserine.

It belongs to the POU transcription factor family. Class-5 subfamily. Interacts with PKM. Interacts with WWP2. Interacts with UBE2I and ZSCAN10. Interacts with PCGF1. Interacts with ESRRB; recruits ESRRB near the POU5F1-SOX2 element in the NANOG proximal promoter; the interaction is DNA independent. Interacts with ZNF322. Interacts with MAPK8 and MAPK9; the interaction allows MAPK8 and MAPK9 to phosphorylate POU5F1 on Ser-355. Interacts (when phosphorylated on Ser-355) with FBXW8. Interacts with FBXW4. Interacts with SOX2 and SOX15; binds synergistically with either SOX2 or SOX15 to DNA. Interacts with DDX56. Post-translationally, sumoylation enhances the protein stability, DNA binding and transactivation activity. Sumoylation is required for enhanced YES1 expression. Ubiquitinated; undergoes 'Lys-63'-linked polyubiquitination by WWP2 leading to proteasomal degradation. In terms of processing, ERK1/2-mediated phosphorylation at Ser-111 promotes nuclear exclusion and proteasomal degradation. Phosphorylation at Thr-235 and Ser-236 decrease DNA-binding and alters ability to activate transcription.

The protein localises to the cytoplasm. Its subcellular location is the nucleus. Transcription factor that binds to the octamer motif (5'-ATTTGCAT-3'). Forms a trimeric complex with SOX2 or SOX15 on DNA and controls the expression of a number of genes involved in embryonic development such as YES1, FGF4, UTF1 and ZFP206. Critical for early embryogenesis and for embryonic stem cell pluripotency. This chain is POU domain, class 5, transcription factor 1 (POU5F1), found in Pan troglodytes (Chimpanzee).